The chain runs to 585 residues: Involucrin (585 aa).

Over residues 1–15 (MSQQHTLPVTLSPAL) the composition is skewed to polar residues. Positions 1-132 (MSQQHTLPVT…LEEEKKLLDQ (132 aa)) are disordered. Gln79 carries Omega-hydroxyceramide glutamate ester lipidation. The segment covering 92 to 115 (WEQHEEYQKAENPEQQLKQEKTQR) has biased composition (basic and acidic residues). 2 omega-hydroxyceramide glutamate ester lipidation sites follow: Gln118 and Gln133. Residues 149 to 540 (KEQLLELPEQ…KDLEQQKGQL (392 aa)) are disordered. Tandem repeats lie at residues 153–162 (LELPEQQEGH), 163–172 (LKHLEQQEGQ), 173–182 (LKHPEQQEGQ), 183–192 (LELPEQQEGQ), 193–202 (LELPEQQEGQ), 203–212 (LELPEQQEGQ), 213–222 (LELPEQQEGQ), 223–232 (LELPEQQEGQ), 233–242 (LELPQQQEGQ), 243–252 (LELSEQQEGQ), 253–262 (LELSEQQEGQ), 263–272 (LKHLEHQEGQ), 273–282 (LEVPEEQMGQ), 283–292 (LKYLEQQEGQ), 293–302 (LKHLDQQEKQ), 303–312 (PELPEQQMGQ), 313–322 (LKHLEQQEGQ), 323–332 (PKHLEQQEGQ), 333–342 (LEQLEEQEGQ), 343–352 (LKHLEQQEGQ), 353–362 (LEHLEHQEGQ), 363–372 (LGLPEQQVLQ), and 373–382 (LKQLEKQQGQ). Positions 153-542 (LELPEQQEGH…LEQQKGQLEQ (390 aa)) are 39 X 10 AA approximate tandem repeats of [LP]-[EKG]-[LHVYQEK]-[PLSQE]-[EQDV]-[QHEKRGA]-Q-[EMVQLP]-[GKLE]-[QHVNLD]. Basic and acidic residues predominate over residues 159 to 178 (QEGHLKHLEQQEGQLKHPEQ). The span at 179-261 (QEGQLELPEQ…QLELSEQQEG (83 aa)) shows a compositional bias: low complexity. Over residues 262–271 (QLKHLEHQEG) the composition is skewed to basic and acidic residues. Composition is skewed to basic and acidic residues over residues 292–304 (QLKH…KQPE), 314–328 (KHLE…HLEQ), and 341–360 (GQLK…EHQE). The segment covering 361-383 (GQLGLPEQQVLQLKQLEKQQGQP) has biased composition (low complexity). One copy of the 24; approximate repeat lies at 383-392 (PKHLEEEEGQ). Basic and acidic residues predominate over residues 384–393 (KHLEEEEGQL). Repeat copies occupy residues 393–402 (LKHLVQQEGQ), 403–412 (LKHLVQQEGQ), 413–422 (LEQQERQVEH), 423–432 (LEQQVGQLKH), 433–442 (LEEQEGQLKH), 443–452 (LEQQQGQLEV), 453–462 (PEQQVGQPKN), 463–472 (LEQEEKQLEL), 473–482 (PEQQEGQVKH), 483–492 (LEKQEAQLEL), and 493–502 (PEQQVGQPKH). Basic and acidic residues-rich tracts occupy residues 415-424 (QQERQVEHLE) and 431-444 (KHLE…KHLE). The span at 445–462 (QQQGQLEVPEQQVGQPKN) shows a compositional bias: low complexity. A compositionally biased stretch (basic and acidic residues) spans 479-488 (QVKHLEKQEA). Gln496 is covalently cross-linked (Isoglutamyl lysine isopeptide (Gln-Lys) (interchain with K-? in other proteins)). The segment covering 501–535 (KHLEQQEKHLEHPEQQDGQLKHLEQQEGQLKDLEQ) has biased composition (basic and acidic residues). The stretch at 503-512 (LEQQEKHLEH) is one 36; approximate repeat. Tandem repeats lie at residues 513–522 (PEQQDGQLKH) and 523–532 (LEQQEGQLKD). A 39; approximate repeat occupies 533–542 (LEQQKGQLEQ).

It belongs to the involucrin family. In terms of assembly, directly or indirectly cross-linked to cornifelin (CNFN). Substrate of transglutaminase. Some glutamines and lysines are cross-linked to other involucrin molecules, to other proteins such as keratin, desmoplakin, periplakin and envoplakin, and to lipids like omega-hydroxyceramide. Keratinocytes of epidermis and other stratified squamous epithelia.

It is found in the cytoplasm. Functionally, part of the insoluble cornified cell envelope (CE) of stratified squamous epithelia. The chain is Involucrin (IVL) from Homo sapiens (Human).